We begin with the raw amino-acid sequence, 211 residues long: Thymidylate kinase (211 aa).

10 to 17 (GPDGAGKT) contacts ATP.

This sequence belongs to the thymidylate kinase family.

The catalysed reaction is dTMP + ATP = dTDP + ADP. Its function is as follows. Phosphorylation of dTMP to form dTDP in both de novo and salvage pathways of dTTP synthesis. The protein is Thymidylate kinase of Lactococcus lactis subsp. cremoris (strain SK11).